Here is a 391-residue protein sequence, read N- to C-terminus: Putative 8-amino-7-oxononanoate synthase (391 aa).

Arg-22 and His-135 together coordinate substrate. Pyridoxal 5'-phosphate is bound by residues Ser-183, 208-211 (DDAH), and 239-242 (TLSK). Position 242 is an N6-(pyridoxal phosphate)lysine (Lys-242). Substrate is bound at residue Thr-358.

It belongs to the class-II pyridoxal-phosphate-dependent aminotransferase family. BioF subfamily. As to quaternary structure, homodimer. Requires pyridoxal 5'-phosphate as cofactor.

The catalysed reaction is 6-carboxyhexanoyl-[ACP] + L-alanine + H(+) = (8S)-8-amino-7-oxononanoate + holo-[ACP] + CO2. The protein operates within cofactor biosynthesis; biotin biosynthesis. Functionally, catalyzes the decarboxylative condensation of pimeloyl-[acyl-carrier protein] and L-alanine to produce 8-amino-7-oxononanoate (AON), [acyl-carrier protein], and carbon dioxide. In Thermosynechococcus vestitus (strain NIES-2133 / IAM M-273 / BP-1), this protein is Putative 8-amino-7-oxononanoate synthase (bioF).